A 268-amino-acid chain; its full sequence is Tryptophan synthase alpha chain (268 aa).

Active-site proton acceptor residues include glutamate 49 and aspartate 60.

The protein belongs to the TrpA family. As to quaternary structure, tetramer of two alpha and two beta chains.

It catalyses the reaction (1S,2R)-1-C-(indol-3-yl)glycerol 3-phosphate + L-serine = D-glyceraldehyde 3-phosphate + L-tryptophan + H2O. It participates in amino-acid biosynthesis; L-tryptophan biosynthesis; L-tryptophan from chorismate: step 5/5. The alpha subunit is responsible for the aldol cleavage of indoleglycerol phosphate to indole and glyceraldehyde 3-phosphate. In Pseudomonas aeruginosa (strain ATCC 15692 / DSM 22644 / CIP 104116 / JCM 14847 / LMG 12228 / 1C / PRS 101 / PAO1), this protein is Tryptophan synthase alpha chain.